The following is a 103-amino-acid chain: Large ribosomal subunit protein bL21 (103 aa).

It belongs to the bacterial ribosomal protein bL21 family. As to quaternary structure, part of the 50S ribosomal subunit. Contacts protein L20.

In terms of biological role, this protein binds to 23S rRNA in the presence of protein L20. The sequence is that of Large ribosomal subunit protein bL21 from Actinobacillus succinogenes (strain ATCC 55618 / DSM 22257 / CCUG 43843 / 130Z).